The sequence spans 168 residues: Large ribosomal subunit protein uL10 (168 aa).

It belongs to the universal ribosomal protein uL10 family. As to quaternary structure, part of the ribosomal stalk of the 50S ribosomal subunit. The N-terminus interacts with L11 and the large rRNA to form the base of the stalk. The C-terminus forms an elongated spine to which L12 dimers bind in a sequential fashion forming a multimeric L10(L12)X complex.

Forms part of the ribosomal stalk, playing a central role in the interaction of the ribosome with GTP-bound translation factors. This is Large ribosomal subunit protein uL10 from Ralstonia pickettii (strain 12J).